We begin with the raw amino-acid sequence, 130 residues long: Arsenate reductase 2.2 (130 aa).

A Rhodanese domain is found at 18–119; it reads RDPRIAVVDV…WELSGRPVCR (102 aa). The active-site Cysteine persulfide intermediate is the Cys70.

It carries out the reaction [glutaredoxin]-dithiol + arsenate + glutathione + H(+) = glutathionyl-S-S-[glutaredoxin] + arsenite + H2O. In terms of biological role, possesses arsenate reductase activity in vitro. Catalyzes the reduction of arsenate [As(V)] to arsenite [As(III)]. May play a role in arsenic retention in roots. Its function is as follows. Possesses phosphatase activity towards p-nitrophenyl phosphate in vitro. This Oryza sativa subsp. japonica (Rice) protein is Arsenate reductase 2.2 (ACR2.2).